Consider the following 377-residue polypeptide: Actin-related protein T2 (377 aa).

Belongs to the actin family.

Its subcellular location is the cytoplasm. It is found in the cytoskeleton. The chain is Actin-related protein T2 (ACTRT2) from Macaca fascicularis (Crab-eating macaque).